We begin with the raw amino-acid sequence, 187 residues long: MSKSASRARLADIIRNRSFGRGEITLASGRKSDFYFNLKPTMLDPEGAALLAELTYEALRDEQVDFIGGLEMGAVPLAGAIAQLSWLKNHPIAAFFVRKKPKEHGAKLAIEGLAKGESLAGKRCVIVEDVTTTGGSAIKAVEAVRESGAEIVLVLTMVDREEGATEAFAEAGLPFRSLYKASEFLNR.

Residues arginine 98, lysine 99, lysine 102, histidine 104, and 128–136 (EDVTTTGGS) contribute to the 5-phospho-alpha-D-ribose 1-diphosphate site. Orotate contacts are provided by threonine 132 and arginine 160.

Belongs to the purine/pyrimidine phosphoribosyltransferase family. PyrE subfamily. As to quaternary structure, homodimer. Requires Mg(2+) as cofactor.

It carries out the reaction orotidine 5'-phosphate + diphosphate = orotate + 5-phospho-alpha-D-ribose 1-diphosphate. It participates in pyrimidine metabolism; UMP biosynthesis via de novo pathway; UMP from orotate: step 1/2. Functionally, catalyzes the transfer of a ribosyl phosphate group from 5-phosphoribose 1-diphosphate to orotate, leading to the formation of orotidine monophosphate (OMP). This Rhodopseudomonas palustris (strain BisB5) protein is Orotate phosphoribosyltransferase.